The primary structure comprises 263 residues: Small ribosomal subunit protein eS4 (263 aa).

Residues 42–104 form the S4 RNA-binding domain; it reads LPLIVFLRNR…TGEHFRLVYD (63 aa).

The protein belongs to the eukaryotic ribosomal protein eS4 family.

This Gorilla gorilla gorilla (Western lowland gorilla) protein is Small ribosomal subunit protein eS4 (RPS4Y1).